The chain runs to 284 residues: Tropomyosin (284 aa).

The stretch at 1–284 (MDAIKKKMQA…DQTFQELSGY (284 aa)) forms a coiled coil. Basic and acidic residues predominate over residues 110–142 (TAKLEEATHTADESERVRKVMENRSFQDEERAN). The interval 110 to 143 (TAKLEEATHTADESERVRKVMENRSFQDEERANT) is disordered.

The protein belongs to the tropomyosin family.

Functionally, tropomyosin, in association with the troponin complex, plays a central role in the calcium dependent regulation of muscle contraction. This is Tropomyosin from Anisakis simplex (Herring worm).